An 85-amino-acid polypeptide reads, in one-letter code: Large ribosomal subunit protein bL31B (85 aa).

It belongs to the bacterial ribosomal protein bL31 family. Type B subfamily. In terms of assembly, part of the 50S ribosomal subunit.

This Kocuria rhizophila (strain ATCC 9341 / DSM 348 / NBRC 103217 / DC2201) protein is Large ribosomal subunit protein bL31B.